Consider the following 260-residue polypeptide: Adenosine 5'-phosphosulfate reductase (260 aa).

[4Fe-4S] cluster contacts are provided by cysteine 130, cysteine 131, cysteine 213, and cysteine 216. The active-site Nucleophile; cysteine thiosulfonate intermediate is cysteine 241.

The protein belongs to the PAPS reductase family. CysH subfamily. It depends on [4Fe-4S] cluster as a cofactor.

It localises to the cytoplasm. The enzyme catalyses [thioredoxin]-disulfide + sulfite + AMP + 2 H(+) = adenosine 5'-phosphosulfate + [thioredoxin]-dithiol. Its pathway is sulfur metabolism; hydrogen sulfide biosynthesis; sulfite from sulfate. Its function is as follows. Catalyzes the formation of sulfite from adenosine 5'-phosphosulfate (APS) using thioredoxin as an electron donor. This Agrobacterium fabrum (strain C58 / ATCC 33970) (Agrobacterium tumefaciens (strain C58)) protein is Adenosine 5'-phosphosulfate reductase.